We begin with the raw amino-acid sequence, 331 residues long: Mitochondrial carrier protein CoAc1 (331 aa).

A run of 6 helical transmembrane segments spans residues 16–36, 79–99, 123–143, 193–213, 231–251, and 292–312; these read LVDT…AGAI, FYKG…LHYM, LVAG…LDLA, GIGP…YIYE, LPCG…LDVV, and FAGL…GFTV. Solcar repeat units follow at residues 21-107, 117-218, and 225-319; these read PVLA…YRDW, SGPI…LKRH, and NSVR…MKSW.

It belongs to the mitochondrial carrier (TC 2.A.29) family. Expressed throughout the plant.

It localises to the mitochondrion inner membrane. Functionally, required for the accumulation of coenzyme A in the mitochondrial matrix. The protein is Mitochondrial carrier protein CoAc1 of Arabidopsis thaliana (Mouse-ear cress).